Here is a 61-residue protein sequence, read N- to C-terminus: Large ribosomal subunit protein eL37 (61 aa).

C19, C22, C34, and C37 together coordinate Zn(2+). The segment at 19-37 adopts a C4-type zinc-finger fold; the sequence is CRRCGRNAYNVSKHYCAAC.

Belongs to the eukaryotic ribosomal protein eL37 family. Requires Zn(2+) as cofactor.

Its function is as follows. Binds to the 23S rRNA. The sequence is that of Large ribosomal subunit protein eL37 (rpl37e) from Saccharolobus solfataricus (strain ATCC 35092 / DSM 1617 / JCM 11322 / P2) (Sulfolobus solfataricus).